The following is a 71-amino-acid chain: UPF0346 protein SSU05_1322 (71 aa).

The protein belongs to the UPF0346 family.

This is UPF0346 protein SSU05_1322 from Streptococcus suis (strain 05ZYH33).